The primary structure comprises 766 residues: Tripartite terminase subunit 1 (766 aa).

Residues 191–219 (CSVCFEELCVTANQGEAVHRRLLECTCDH) form a C3H1-type zinc finger. 683 to 690 (FSSVFHCG) serves as a coordination point for ATP.

It belongs to the herpesviridae TRM1 protein family. In terms of assembly, associates with TRM2 and TRM3 to form the tripartite terminase complex. Interacts with portal protein.

It is found in the host nucleus. Its function is as follows. Component of the molecular motor that translocates viral genomic DNA in empty capsid during DNA packaging. Forms a tripartite terminase complex together with TRM2 and TRM3 in the host cytoplasm. Once the complex reaches the host nucleus, it interacts with the capsid portal vertex. This portal forms a ring in which genomic DNA is translocated into the capsid. TRM1 carries an endonuclease activity that plays an important role for the cleavage of concatemeric viral DNA into unit length genomes. The chain is Tripartite terminase subunit 1 from Equus caballus (Horse).